The primary structure comprises 148 residues: Transcription antitermination protein NusB (148 aa).

This sequence belongs to the NusB family.

In terms of biological role, involved in transcription antitermination. Required for transcription of ribosomal RNA (rRNA) genes. Binds specifically to the boxA antiterminator sequence of the ribosomal RNA (rrn) operons. This is Transcription antitermination protein NusB from Aquifex aeolicus (strain VF5).